Reading from the N-terminus, the 169-residue chain is MSSSHKSWNSIYEFTVKDINGVDVSLEKYRGHVCLIVNVACKUGATDKNYRQLQEMHTRLVGKGLRILAFPCNQFGGQEPWAEAEIKKFVTEKYGVQFDMFSKIKVNGSDADDLYKFLKSRQHGTLTNNIKWNFSKFLVDRQGQPVKRYSPTTAPYDIEGDIMELLEKK.

U43 is an active-site residue. U43 is a non-standard amino acid (selenocysteine).

This sequence belongs to the glutathione peroxidase family.

The enzyme catalyses 2 glutathione + H2O2 = glutathione disulfide + 2 H2O. The sequence is that of Glutathione peroxidase (GPX1) from Schistosoma mansoni (Blood fluke).